The sequence spans 635 residues: 1-deoxy-D-xylulose-5-phosphate synthase (635 aa).

Thiamine diphosphate-binding positions include histidine 74 and 115 to 117 (AHS). Position 146 (aspartate 146) interacts with Mg(2+). Residues 147–148 (GA), asparagine 176, tyrosine 283, and glutamate 365 each bind thiamine diphosphate. Asparagine 176 is a binding site for Mg(2+).

The protein belongs to the transketolase family. DXPS subfamily. In terms of assembly, homodimer. Mg(2+) is required as a cofactor. Requires thiamine diphosphate as cofactor.

The enzyme catalyses D-glyceraldehyde 3-phosphate + pyruvate + H(+) = 1-deoxy-D-xylulose 5-phosphate + CO2. It functions in the pathway metabolic intermediate biosynthesis; 1-deoxy-D-xylulose 5-phosphate biosynthesis; 1-deoxy-D-xylulose 5-phosphate from D-glyceraldehyde 3-phosphate and pyruvate: step 1/1. Catalyzes the acyloin condensation reaction between C atoms 2 and 3 of pyruvate and glyceraldehyde 3-phosphate to yield 1-deoxy-D-xylulose-5-phosphate (DXP). The chain is 1-deoxy-D-xylulose-5-phosphate synthase from Polaromonas sp. (strain JS666 / ATCC BAA-500).